The sequence spans 57 residues: COP9 signalosome complex subunit 9 (57 aa).

This sequence belongs to the CSN9 family. In terms of assembly, component of the CSN complex, probably composed of cops1, cops2, cops3, cops4, cops5, cops6, cops7, cops8 and cops9.

It is found in the nucleus. Its subcellular location is the cytoplasm. The protein resides in the nucleoplasm. Its function is as follows. Component of the COP9 signalosome complex (CSN), a complex involved in various cellular and developmental processes. The CSN complex is an essential regulator of the ubiquitin (Ubl) conjugation pathway by mediating the deneddylation of the cullin subunits of SCF-type E3 ligase complexes, leading to decrease the Ubl ligase activity. May play a role in cell proliferation. This Danio rerio (Zebrafish) protein is COP9 signalosome complex subunit 9.